The following is a 397-amino-acid chain: Serpin B10 (397 aa).

Residues 62–85 (RDQGVKSSPESEKKRKMEFNSSNS) are disordered. Basic and acidic residues predominate over residues 70 to 79 (PESEKKRKME). The short motif at 74–77 (KKRK) is the Nuclear localization signal element.

Belongs to the serpin family. Ov-serpin subfamily.

The protein resides in the nucleus. It is found in the cytoplasm. Functionally, protease inhibitor that may play a role in the regulation of protease activities during hematopoiesis and apoptosis induced by TNF. May regulate protease activities in the cytoplasm and in the nucleus. In Papio anubis (Olive baboon), this protein is Serpin B10 (SERPINB10).